Reading from the N-terminus, the 273-residue chain is Gap junction beta-5 protein (273 aa).

The Cytoplasmic portion of the chain corresponds to 1–20 (MNWSIFEGLLSGVNKYSTAF). A helical membrane pass occupies residues 21–40 (GRIWLSLVFIFRVLVYLVTA). Topologically, residues 41–75 (ERVWSDDHKDFDCNTRQPGCSNVCFDEFFPVSHVR) are extracellular. The chain crosses the membrane as a helical span at residues 76–98 (LWALQLILVTCPSLLVVMHVAYR). The Cytoplasmic segment spans residues 99–126 (EVQEKRHREAHGENSGRLYLNPGKKRGG). A helical transmembrane segment spans residues 127–149 (LWWTYVCSLVFKASVDIAFLYVF). Residues 150–187 (HSFYPKYILPPVVKCHADPCPNIVDCFISKPSEKNIFT) are Extracellular-facing. A helical transmembrane segment spans residues 188-210 (LFMVATAAICILLNLVELIYLVS). Over 211–273 (KRCHECLAAR…PRDHVKKTIL (63 aa)) the chain is Cytoplasmic.

This sequence belongs to the connexin family. Beta-type (group I) subfamily. In terms of assembly, a connexon is composed of a hexamer of connexins.

The protein localises to the cell membrane. Its subcellular location is the cell junction. It localises to the gap junction. In terms of biological role, one gap junction consists of a cluster of closely packed pairs of transmembrane channels, the connexons, through which materials of low MW diffuse from one cell to a neighboring cell. The sequence is that of Gap junction beta-5 protein (GJB5) from Homo sapiens (Human).